Reading from the N-terminus, the 278-residue chain is Thiazole synthase (278 aa).

Residue K109 is the Schiff-base intermediate with DXP of the active site. 1-deoxy-D-xylulose 5-phosphate is bound by residues G170, 197 to 198, and 219 to 220; these read AG and NT.

Belongs to the ThiG family. In terms of assembly, homotetramer. Forms heterodimers with either ThiH or ThiS.

It localises to the cytoplasm. It carries out the reaction [ThiS sulfur-carrier protein]-C-terminal-Gly-aminoethanethioate + 2-iminoacetate + 1-deoxy-D-xylulose 5-phosphate = [ThiS sulfur-carrier protein]-C-terminal Gly-Gly + 2-[(2R,5Z)-2-carboxy-4-methylthiazol-5(2H)-ylidene]ethyl phosphate + 2 H2O + H(+). Its pathway is cofactor biosynthesis; thiamine diphosphate biosynthesis. Catalyzes the rearrangement of 1-deoxy-D-xylulose 5-phosphate (DXP) to produce the thiazole phosphate moiety of thiamine. Sulfur is provided by the thiocarboxylate moiety of the carrier protein ThiS. In vitro, sulfur can be provided by H(2)S. This is Thiazole synthase from Cupriavidus taiwanensis (strain DSM 17343 / BCRC 17206 / CCUG 44338 / CIP 107171 / LMG 19424 / R1) (Ralstonia taiwanensis (strain LMG 19424)).